Consider the following 401-residue polypeptide: Acetate kinase (401 aa).

Asn-9 lines the Mg(2+) pocket. Residue Lys-16 coordinates ATP. Arg-88 provides a ligand contact to substrate. The active-site Proton donor/acceptor is the Asp-147. ATP is bound by residues 207-211 (HLGNG), 282-284 (DCR), and 333-337 (GIGEN). Glu-388 serves as a coordination point for Mg(2+).

Belongs to the acetokinase family. As to quaternary structure, homodimer. The cofactor is Mg(2+). It depends on Mn(2+) as a cofactor.

Its subcellular location is the cytoplasm. It catalyses the reaction acetate + ATP = acetyl phosphate + ADP. The protein operates within metabolic intermediate biosynthesis; acetyl-CoA biosynthesis; acetyl-CoA from acetate: step 1/2. In terms of biological role, catalyzes the formation of acetyl phosphate from acetate and ATP. Can also catalyze the reverse reaction. The sequence is that of Acetate kinase from Haemophilus influenzae (strain 86-028NP).